We begin with the raw amino-acid sequence, 690 residues long: Amino-acid acetyltransferase, mitochondrial (690 aa).

A disordered region spans residues 62 to 93 (RFPSVKKPKPPIPRQNQGAVETQSGKENEKPG). Residues 75–84 (RQNQGAVETQ) show a composition bias toward polar residues. The region spanning 508 to 679 (DGHHLTLDDP…DYEAVCRSIQ (172 aa)) is the N-acetyltransferase domain.

It belongs to the acetyltransferase family.

The protein resides in the mitochondrion. It carries out the reaction L-glutamate + acetyl-CoA = N-acetyl-L-glutamate + CoA + H(+). The protein operates within amino-acid biosynthesis; L-arginine biosynthesis; N(2)-acetyl-L-ornithine from L-glutamate: step 1/4. N-acetylglutamate synthase involved in arginine biosynthesis. The protein is Amino-acid acetyltransferase, mitochondrial (arg2) of Talaromyces stipitatus (strain ATCC 10500 / CBS 375.48 / QM 6759 / NRRL 1006) (Penicillium stipitatum).